A 334-amino-acid polypeptide reads, in one-letter code: Protein-methionine-sulfoxide reductase catalytic subunit MsrP (334 aa).

The tat-type signal signal peptide spans 1–44 (MKAVNPLTENDVTPESLFNARRRTVLKMLGMSAAALSLPGAARA). Mo-molybdopterin contacts are provided by residues Asn88, 91-92 (YE), Cys146, Thr181, Asn233, Arg238, and 249-251 (GIK).

The protein belongs to the MsrP family. As to quaternary structure, heterodimer of a catalytic subunit (MsrP) and a heme-binding subunit (MsrQ). The cofactor is Mo-molybdopterin. Predicted to be exported by the Tat system. The position of the signal peptide cleavage has not been experimentally proven.

The protein localises to the periplasm. The enzyme catalyses L-methionyl-[protein] + a quinone + H2O = L-methionyl-(S)-S-oxide-[protein] + a quinol. It catalyses the reaction L-methionyl-[protein] + a quinone + H2O = L-methionyl-(R)-S-oxide-[protein] + a quinol. Functionally, part of the MsrPQ system that repairs oxidized periplasmic proteins containing methionine sulfoxide residues (Met-O), using respiratory chain electrons. Thus protects these proteins from oxidative-stress damage caused by reactive species of oxygen and chlorine generated by the host defense mechanisms. MsrPQ is essential for the maintenance of envelope integrity under bleach stress, rescuing a wide series of structurally unrelated periplasmic proteins from methionine oxidation. The catalytic subunit MsrP is non-stereospecific, being able to reduce both (R-) and (S-) diastereoisomers of methionine sulfoxide. The protein is Protein-methionine-sulfoxide reductase catalytic subunit MsrP of Erwinia tasmaniensis (strain DSM 17950 / CFBP 7177 / CIP 109463 / NCPPB 4357 / Et1/99).